The following is a 1300-amino-acid chain: uncharacterized protein (1300 aa).

The signal sequence occupies residues 1-26; it reads MGYKLKRWPLVAFTFTGIGLGVVLAA. The N-palmitoyl cysteine moiety is linked to residue Cys27. The S-diacylglycerol cysteine moiety is linked to residue Cys27. Positions 464 to 478 are enriched in low complexity; the sequence is AMAAASTGADSSSGT. Disordered stretches follow at residues 464–487, 620–639, 774–797, and 1244–1269; these read AMAA…SGGN, ASVS…DTQE, DSQK…NDKK, and KMSD…SPRT. 2 stretches are compositionally biased toward polar residues: residues 620–637 and 774–783; these read ASVS…STDT and DSQKSTNTVK. Basic and acidic residues predominate over residues 785 to 797; it reads PDIKPTRENNDKK. The span at 1257-1269 shows a compositional bias: basic residues; sequence TIRKPKPHHSPRT.

It belongs to the MG307/MG309/MG338 family.

It is found in the cell membrane. This is an uncharacterized protein from Mycoplasma pneumoniae (strain ATCC 29342 / M129 / Subtype 1) (Mycoplasmoides pneumoniae).